We begin with the raw amino-acid sequence, 521 residues long: GMP synthase [glutamine-hydrolyzing] (521 aa).

A Glutamine amidotransferase type-1 domain is found at 9 to 203 (KILILDFGSQ…ISGICQCEKN (195 aa)). Cys-86 serves as the catalytic Nucleophile. Active-site residues include His-177 and Glu-179. Residues 204–396 (WTTDNIIAKL…LSIPPHIIYR (193 aa)) enclose the GMPS ATP-PPase domain. 231–237 (SGGVDSL) contacts ATP.

Homodimer.

The enzyme catalyses XMP + L-glutamine + ATP + H2O = GMP + L-glutamate + AMP + diphosphate + 2 H(+). The protein operates within purine metabolism; GMP biosynthesis; GMP from XMP (L-Gln route): step 1/1. Its function is as follows. Catalyzes the synthesis of GMP from XMP. The polypeptide is GMP synthase [glutamine-hydrolyzing] (Ruthia magnifica subsp. Calyptogena magnifica).